The chain runs to 129 residues: uncharacterized protein (129 aa).

A disordered region spans residues 52–94; that stretch reads NGDEESQDDWLNDLLKSDGDGGKAGPVDPSHPMETTTTDHSSQ. Positions 53–62 are enriched in acidic residues; it reads GDEESQDDWL. Residues 84–94 show a composition bias toward polar residues; sequence METTTTDHSSQ.

This is an uncharacterized protein from Caenorhabditis elegans.